The primary structure comprises 257 residues: 3-deoxy-manno-octulosonate cytidylyltransferase (257 aa).

This sequence belongs to the KdsB family.

The protein resides in the cytoplasm. It carries out the reaction 3-deoxy-alpha-D-manno-oct-2-ulosonate + CTP = CMP-3-deoxy-beta-D-manno-octulosonate + diphosphate. It participates in nucleotide-sugar biosynthesis; CMP-3-deoxy-D-manno-octulosonate biosynthesis; CMP-3-deoxy-D-manno-octulosonate from 3-deoxy-D-manno-octulosonate and CTP: step 1/1. Its pathway is bacterial outer membrane biogenesis; lipopolysaccharide biosynthesis. Activates KDO (a required 8-carbon sugar) for incorporation into bacterial lipopolysaccharide in Gram-negative bacteria. In Stenotrophomonas maltophilia (strain K279a), this protein is 3-deoxy-manno-octulosonate cytidylyltransferase.